The primary structure comprises 414 residues: MTQANLSETLFKPRFKHTETSTLVRRFNRGSQPPMQSALDGKNVPHWYRMINRLMWIWRGVDPREILDVQARIVMSDAERTDDDLYDTVIGYRGGNWIYEWAKQAMDWQQKACQEQDAMRSGRYWLHASTLYNIAAYPHLKGDELAEQAQALANRAYEEAAQRLPGSLREMEFAVPGGSPVTAFLHMPKGDGPFPTVLMCGGLDAMQTDYYTLYERYFAPRGIAMLTLDMPSVGFSSKWKLTQDSSLLHQHVLKALPNVPWVDHTRVAAFGFRFGANVAVRLAYLEAPRLKAVACLGPVVHALLSDPQRQSTVPEMYLDVLASRLGMHDASDEALRVELNRYSLKVQGLLGRRCPTPMLSGFWKNDPFSPEEESRLITTSSSDGKLIEIPFNPVYRNFDRALQEITDWINHRLC.

The protein belongs to the FrsA family.

The catalysed reaction is a carboxylic ester + H2O = an alcohol + a carboxylate + H(+). Catalyzes the hydrolysis of esters. The protein is Esterase FrsA of Salmonella choleraesuis (strain SC-B67).